Here is a 186-residue protein sequence, read N- to C-terminus: Ribosome-recycling factor (186 aa).

The protein belongs to the RRF family.

It localises to the cytoplasm. Responsible for the release of ribosomes from messenger RNA at the termination of protein biosynthesis. May increase the efficiency of translation by recycling ribosomes from one round of translation to another. This is Ribosome-recycling factor from Azorhizobium caulinodans (strain ATCC 43989 / DSM 5975 / JCM 20966 / LMG 6465 / NBRC 14845 / NCIMB 13405 / ORS 571).